The primary structure comprises 264 residues: S-adenosylmethionine decarboxylase proenzyme (264 aa).

The active-site Schiff-base intermediate with substrate; via pyruvic acid is Ser-113. Position 113 is a pyruvic acid (Ser); by autocatalysis (Ser-113). His-118 (proton acceptor; for processing activity) is an active-site residue. Cys-141 functions as the Proton donor; for catalytic activity in the catalytic mechanism.

The protein belongs to the prokaryotic AdoMetDC family. Type 2 subfamily. As to quaternary structure, heterooctamer of four alpha and four beta chains arranged as a tetramer of alpha/beta heterodimers. Pyruvate serves as cofactor. In terms of processing, is synthesized initially as an inactive proenzyme. Formation of the active enzyme involves a self-maturation process in which the active site pyruvoyl group is generated from an internal serine residue via an autocatalytic post-translational modification. Two non-identical subunits are generated from the proenzyme in this reaction, and the pyruvate is formed at the N-terminus of the alpha chain, which is derived from the carboxyl end of the proenzyme. The post-translation cleavage follows an unusual pathway, termed non-hydrolytic serinolysis, in which the side chain hydroxyl group of the serine supplies its oxygen atom to form the C-terminus of the beta chain, while the remainder of the serine residue undergoes an oxidative deamination to produce ammonia and the pyruvoyl group blocking the N-terminus of the alpha chain.

The enzyme catalyses S-adenosyl-L-methionine + H(+) = S-adenosyl 3-(methylsulfanyl)propylamine + CO2. Its pathway is amine and polyamine biosynthesis; S-adenosylmethioninamine biosynthesis; S-adenosylmethioninamine from S-adenosyl-L-methionine: step 1/1. Functionally, catalyzes the decarboxylation of S-adenosylmethionine to S-adenosylmethioninamine (dcAdoMet), the propylamine donor required for the synthesis of the polyamines spermine and spermidine from the diamine putrescine. The protein is S-adenosylmethionine decarboxylase proenzyme of Pseudomonas aeruginosa (strain UCBPP-PA14).